The primary structure comprises 210 residues: Large ribosomal subunit protein uL4 (210 aa).

The segment covering 41–52 has biased composition (polar residues); that stretch reads QTNARQGTASTK. Positions 41-71 are disordered; that stretch reads QTNARQGTASTKTRAEVRGGGRKPWRQKGTG. A compositionally biased stretch (basic residues) spans 60–71; sequence GGRKPWRQKGTG.

It belongs to the universal ribosomal protein uL4 family. In terms of assembly, part of the 50S ribosomal subunit.

Functionally, one of the primary rRNA binding proteins, this protein initially binds near the 5'-end of the 23S rRNA. It is important during the early stages of 50S assembly. It makes multiple contacts with different domains of the 23S rRNA in the assembled 50S subunit and ribosome. Its function is as follows. Forms part of the polypeptide exit tunnel. This Trichormus variabilis (strain ATCC 29413 / PCC 7937) (Anabaena variabilis) protein is Large ribosomal subunit protein uL4.